Here is a 90-residue protein sequence, read N- to C-terminus: Major envelope protein (90 aa).

Residues 53–70 (AVSVVSWAVAAGLIGELI) traverse the membrane as a helical segment.

The protein resides in the virion membrane. Its function is as follows. Essential for membrane formation. The sequence is that of Major envelope protein (P9) from Pseudomonas savastanoi pv. phaseolicola (Pseudomonas syringae pv. phaseolicola).